The primary structure comprises 554 residues: Glucose-6-phosphate isomerase (554 aa).

Glutamate 358 functions as the Proton donor in the catalytic mechanism. Residues histidine 389 and lysine 515 contribute to the active site. The span at 527-540 shows a compositional bias: polar residues; sequence ADNSPAPQSDSSTD. Residues 527 to 554 form a disordered region; it reads ADNSPAPQSDSSTDALVRRYRSERGRTS. Positions 542–554 are enriched in basic and acidic residues; sequence LVRRYRSERGRTS.

This sequence belongs to the GPI family.

Its subcellular location is the cytoplasm. It catalyses the reaction alpha-D-glucose 6-phosphate = beta-D-fructose 6-phosphate. It participates in carbohydrate biosynthesis; gluconeogenesis. The protein operates within carbohydrate degradation; glycolysis; D-glyceraldehyde 3-phosphate and glycerone phosphate from D-glucose: step 2/4. In terms of biological role, catalyzes the reversible isomerization of glucose-6-phosphate to fructose-6-phosphate. The chain is Glucose-6-phosphate isomerase from Mycobacterium avium (strain 104).